A 583-amino-acid chain; its full sequence is Long-chain-fatty-acid--AMP ligase FadD26 (583 aa).

This sequence belongs to the ATP-dependent AMP-binding enzyme family.

The enzyme catalyses holo-[(phenol)carboxyphthiodiolenone synthase] + a long-chain fatty acid + ATP = a long-chain fatty acyl-[(phenol)carboxyphthiodiolenone synthase] + AMP + diphosphate. It catalyses the reaction eicosanoate + holo-[(phenol)carboxyphthiodiolenone synthase] + ATP = icosanoyl-[(phenol)carboxyphthiodiolenone synthase] + AMP + diphosphate. The catalysed reaction is holo-[(phenol)carboxyphthiodiolenone synthase] + docosanoate + ATP = docosanoyl-[(phenol)carboxyphthiodiolenone synthase] + AMP + diphosphate. Its pathway is lipid metabolism; fatty acid biosynthesis. Catalyzes the activation of long-chain fatty acids as acyl-adenylates (acyl-AMP), which are then transferred to the multifunctional polyketide synthase PpsA for further chain extension. Catalyzes the adenylation of the long-chain fatty acids eicosanoate (C20) or docosanoate (C22), and potentially the very-long-chain fatty acid lignocerate (C24). Involved in the biosynthesis of phthiocerol dimycocerosate (DIM A) and phthiodiolone dimycocerosate (DIM B). The polypeptide is Long-chain-fatty-acid--AMP ligase FadD26 (fadD26) (Mycobacterium tuberculosis (strain CDC 1551 / Oshkosh)).